The following is a 324-amino-acid chain: Annexin A3 (324 aa).

Annexin repeat units follow at residues 19–90, 91–162, 174–246, and 250–321; these read FNPS…ALIT, APAV…TLAD, HLAK…AVVR, and NTPA…KICG. An N6-acetyllysine modification is found at lysine 178. Phosphothreonine is present on threonine 268.

It belongs to the annexin family.

Its function is as follows. Inhibitor of phospholipase A2, also possesses anti-coagulant properties. The sequence is that of Annexin A3 (Anxa3) from Rattus norvegicus (Rat).